Consider the following 390-residue polypeptide: Chorismate synthase 2 (390 aa).

NADP(+) is bound by residues Arg-39 and Arg-45. Residues 132–134, 253–254, Gly-298, 313–317, and Arg-339 contribute to the FMN site; these read RSS, NA, and KPIPT.

Belongs to the chorismate synthase family. In terms of assembly, homotetramer. Requires FMNH2 as cofactor.

The enzyme catalyses 5-O-(1-carboxyvinyl)-3-phosphoshikimate = chorismate + phosphate. Its pathway is metabolic intermediate biosynthesis; chorismate biosynthesis; chorismate from D-erythrose 4-phosphate and phosphoenolpyruvate: step 7/7. Catalyzes the anti-1,4-elimination of the C-3 phosphate and the C-6 proR hydrogen from 5-enolpyruvylshikimate-3-phosphate (EPSP) to yield chorismate, which is the branch point compound that serves as the starting substrate for the three terminal pathways of aromatic amino acid biosynthesis. This reaction introduces a second double bond into the aromatic ring system. This is Chorismate synthase 2 from Bacillus cereus (strain ZK / E33L).